The primary structure comprises 483 residues: Glutamate--tRNA ligase (483 aa).

The 'HIGH' region signature appears at 11–21 (PSPTGLLHIGN). The 'KMSKS' region signature appears at 255 to 259 (KLSKR). Lys-258 serves as a coordination point for ATP.

This sequence belongs to the class-I aminoacyl-tRNA synthetase family. Glutamate--tRNA ligase type 1 subfamily. Monomer.

It is found in the cytoplasm. It catalyses the reaction tRNA(Glu) + L-glutamate + ATP = L-glutamyl-tRNA(Glu) + AMP + diphosphate. Its function is as follows. Catalyzes the attachment of glutamate to tRNA(Glu) in a two-step reaction: glutamate is first activated by ATP to form Glu-AMP and then transferred to the acceptor end of tRNA(Glu). In Lactococcus lactis subsp. lactis (strain IL1403) (Streptococcus lactis), this protein is Glutamate--tRNA ligase.